We begin with the raw amino-acid sequence, 95 residues long: Small ribosomal subunit protein uS19 (95 aa).

The disordered stretch occupies residues 76 to 95; that stretch reads PTRRFGGHADKKAKKGELKK. The span at 82–95 shows a compositional bias: basic and acidic residues; it reads GHADKKAKKGELKK.

Belongs to the universal ribosomal protein uS19 family.

Functionally, protein S19 forms a complex with S13 that binds strongly to the 16S ribosomal RNA. This Thermotoga neapolitana (strain ATCC 49049 / DSM 4359 / NBRC 107923 / NS-E) protein is Small ribosomal subunit protein uS19.